Consider the following 772-residue polypeptide: Lon protease (772 aa).

Positions 6-200 constitute a Lon N-terminal domain; that stretch reads YPTLPLKNTV…LMHRYLNHEV (195 aa). Residue 352-359 coordinates ATP; the sequence is GPPGVGKT. Residues 588–769 enclose the Lon proteolytic domain; that stretch reads QLAPGVAAGL…EEVLAEAIPD (182 aa). Residues Ser675 and Lys718 contribute to the active site.

The protein belongs to the peptidase S16 family. Homohexamer. Organized in a ring with a central cavity.

The protein localises to the cytoplasm. It catalyses the reaction Hydrolysis of proteins in presence of ATP.. ATP-dependent serine protease that mediates the selective degradation of mutant and abnormal proteins as well as certain short-lived regulatory proteins. Required for cellular homeostasis and for survival from DNA damage and developmental changes induced by stress. Degrades polypeptides processively to yield small peptide fragments that are 5 to 10 amino acids long. Binds to DNA in a double-stranded, site-specific manner. The polypeptide is Lon protease (Nitrosococcus oceani (strain ATCC 19707 / BCRC 17464 / JCM 30415 / NCIMB 11848 / C-107)).